A 75-amino-acid polypeptide reads, in one-letter code: Small ribosomal subunit protein bS18c (75 aa).

This sequence belongs to the bacterial ribosomal protein bS18 family. In terms of assembly, part of the 30S ribosomal subunit.

It localises to the plastid. It is found in the chloroplast. This Psilotum nudum (Whisk fern) protein is Small ribosomal subunit protein bS18c.